The chain runs to 332 residues: MAAHASELEIAKKNLTDAIGENVKHYWANLKLWFKQKISKEEFDLEARRLLAQDNVHVHNDFLLAILTRCQIIVSTSEGPGSLQWSGGSASKPGKPSRGKKKFPSVRQKFDHRFQPQNPLAGVPVFSPREAEEEELKLSAQTLLLPSRGQLEARMMVSAFESDLDSVAEDAVSCMLCALQVHLKDILTALVSRRKAYRLRDGHFLYAFGSDVTPRPYLKNSLPAYHSATECPPASASLPAAAPARVCPDEAEQNAALLLACSADTAAPPLQPVSVYDLLEALQVQRRVMPSHSMYALNMERILARLWHPSHEELEQDHIHRQHLALRDGLVT.

The interval 79–106 (GPGSLQWSGGSASKPGKPSRGKKKFPSV) is disordered. The span at 95–104 (KPSRGKKKFP) shows a compositional bias: basic residues.

It belongs to the TADA1 family.

The protein resides in the nucleus. Functionally, probably involved in transcriptional regulation. The chain is Transcriptional adapter 1 (tada1) from Danio rerio (Zebrafish).